Here is a 936-residue protein sequence, read N- to C-terminus: Protein translocase subunit SecA (936 aa).

ATP contacts are provided by residues Q87, 105–109 (GEGKT), and D515. Residues C920, C922, C931, and H932 each contribute to the Zn(2+) site.

It belongs to the SecA family. Monomer and homodimer. Part of the essential Sec protein translocation apparatus which comprises SecA, SecYEG and auxiliary proteins SecDF-YajC and YidC. Zn(2+) is required as a cofactor.

Its subcellular location is the cell inner membrane. It is found in the cytoplasm. It catalyses the reaction ATP + H2O + cellular proteinSide 1 = ADP + phosphate + cellular proteinSide 2.. Part of the Sec protein translocase complex. Interacts with the SecYEG preprotein conducting channel. Has a central role in coupling the hydrolysis of ATP to the transfer of proteins into and across the cell membrane, serving both as a receptor for the preprotein-SecB complex and as an ATP-driven molecular motor driving the stepwise translocation of polypeptide chains across the membrane. The chain is Protein translocase subunit SecA from Paraburkholderia phytofirmans (strain DSM 17436 / LMG 22146 / PsJN) (Burkholderia phytofirmans).